The sequence spans 298 residues: Aspartate carbamoyltransferase catalytic subunit (298 aa).

Carbamoyl phosphate is bound by residues arginine 54 and threonine 55. Lysine 82 lines the L-aspartate pocket. Residues arginine 104, histidine 132, and glutamine 135 each contribute to the carbamoyl phosphate site. Arginine 165 and arginine 218 together coordinate L-aspartate. Carbamoyl phosphate-binding residues include glycine 260 and proline 261.

The protein belongs to the aspartate/ornithine carbamoyltransferase superfamily. ATCase family. As to quaternary structure, heterododecamer (2C3:3R2) of six catalytic PyrB chains organized as two trimers (C3), and six regulatory PyrI chains organized as three dimers (R2).

It carries out the reaction carbamoyl phosphate + L-aspartate = N-carbamoyl-L-aspartate + phosphate + H(+). It functions in the pathway pyrimidine metabolism; UMP biosynthesis via de novo pathway; (S)-dihydroorotate from bicarbonate: step 2/3. Its function is as follows. Catalyzes the condensation of carbamoyl phosphate and aspartate to form carbamoyl aspartate and inorganic phosphate, the committed step in the de novo pyrimidine nucleotide biosynthesis pathway. In Wolbachia sp. subsp. Brugia malayi (strain TRS), this protein is Aspartate carbamoyltransferase catalytic subunit.